The following is a 223-amino-acid chain: RNA-free ribonuclease P (223 aa).

Belongs to the HARP family.

It catalyses the reaction Endonucleolytic cleavage of RNA, removing 5'-extranucleotides from tRNA precursor.. RNA-free RNase P that catalyzes the removal of the 5'-leader sequence from pre-tRNA to produce the mature 5'-terminus. This chain is RNA-free ribonuclease P, found in Methanococcus maripaludis (strain C7 / ATCC BAA-1331).